The sequence spans 268 residues: Phosphate import ATP-binding protein PstB (268 aa).

The ABC transporter domain occupies 22–263 (LAVRNLNFYY…PKQQQTQDYI (242 aa)). ATP is bound at residue 54 to 61 (GPSGCGKS).

This sequence belongs to the ABC transporter superfamily. Phosphate importer (TC 3.A.1.7) family. As to quaternary structure, the complex is composed of two ATP-binding proteins (PstB), two transmembrane proteins (PstC and PstA) and a solute-binding protein (PstS).

It localises to the cell inner membrane. The enzyme catalyses phosphate(out) + ATP + H2O = ADP + 2 phosphate(in) + H(+). Its function is as follows. Part of the ABC transporter complex PstSACB involved in phosphate import. Responsible for energy coupling to the transport system. The protein is Phosphate import ATP-binding protein PstB of Gluconobacter oxydans (strain 621H) (Gluconobacter suboxydans).